A 906-amino-acid polypeptide reads, in one-letter code: Patched domain-containing protein 3 (906 aa).

The tract at residues 1-70 (MISSKVAPGE…LGQEAPPPRR (70 aa)) is disordered. Asn-148 and Asn-235 each carry an N-linked (GlcNAc...) asparagine glycan. The next 11 membrane-spanning stretches (helical) occupy residues 338-358 (TVIPLFHLAYILIILFAVVSC), 370-390 (VAVFGVFSVAMSVVSGFGLML), 392-412 (LGVPFVIIVANSPFLILGVGV), 442-462 (VAVSITITTITNVLAFYTGIT), 476-496 (GTTLLFCYFYSITCFGAVMAL), 559-579 (FIVVLLYIFYIISSIYGCFQV), 760-780 (VMIASTAMFIVSLLLIPHPVC), 782-802 (LWVTFAIASVIVGVTGFMAFW), 814-834 (LVICIGFSFDFSAHISYAFVS), 848-868 (LYLLGYPVLQSAISTIIGVCV), and 883-903 (IMFLVMFFGAAHGLIFIPVFL). The SSD domain occupies 339-496 (VIPLFHLAYI…ITCFGAVMAL (158 aa)).

Belongs to the patched family. Expressed in germ cells of the testis (at protein level).

Its subcellular location is the cell projection. The protein resides in the cilium. It is found in the flagellum membrane. It localises to the endoplasmic reticulum membrane. Functionally, may play a role in sperm development or sperm function. However, does not appear to have an essential role in spermatogenesis or male fertility. This chain is Patched domain-containing protein 3 (Ptchd3), found in Mus musculus (Mouse).